A 434-amino-acid polypeptide reads, in one-letter code: Asparagine--tRNA ligase (434 aa).

Belongs to the class-II aminoacyl-tRNA synthetase family. In terms of assembly, homodimer.

Its subcellular location is the cytoplasm. It catalyses the reaction tRNA(Asn) + L-asparagine + ATP = L-asparaginyl-tRNA(Asn) + AMP + diphosphate + H(+). This is Asparagine--tRNA ligase from Oenococcus oeni (strain ATCC BAA-331 / PSU-1).